A 387-amino-acid chain; its full sequence is Ubiquitin-conjugating enzyme E2 25 (387 aa).

The interval 117–164 (APPVRDDIDEGRGSDISDTTSEPIDDDMAGDGEVDDDDEEEEDDEDAD) is disordered. The span at 120-131 (VRDDIDEGRGSD) shows a compositional bias: basic and acidic residues. The span at 139-164 (PIDDDMAGDGEVDDDDEEEEDDEDAD) shows a compositional bias: acidic residues. The 167-residue stretch at 214–380 (TATDRLMKEI…QQIHAKSGWY (167 aa)) folds into the UBC core domain. C315 serves as the catalytic Glycyl thioester intermediate.

It belongs to the ubiquitin-conjugating enzyme family. In terms of tissue distribution, in the embryo, expressed in precursor neuron and muscle cells and in other cells such as hypodermal cells. After hatching of L1 larvae and in all subsequent stages, strongest expression in pharyngeal muscle and anal muscle cells. In L4 larvae and adolescent hermaphrodites, also expressed in the vulval muscles. Expression also detected in all four nerve cords and in neurons with weaker levels in all body wall muscles.

The protein resides in the cytoplasm. It is found in the nucleus. The catalysed reaction is S-ubiquitinyl-[E1 ubiquitin-activating enzyme]-L-cysteine + [E2 ubiquitin-conjugating enzyme]-L-cysteine = [E1 ubiquitin-activating enzyme]-L-cysteine + S-ubiquitinyl-[E2 ubiquitin-conjugating enzyme]-L-cysteine.. It functions in the pathway protein modification; protein ubiquitination. Functionally, catalyzes the covalent attachment of ubiquitin to other proteins (Potential). Required for the maintenance of neuromuscular function. This is Ubiquitin-conjugating enzyme E2 25 from Caenorhabditis elegans.